Consider the following 270-residue polypeptide: L-fucose dehydrogenase (270 aa).

Arginine 19, isoleucine 21, aspartate 40, lysine 41, aspartate 62, valine 63, asparagine 89, tyrosine 154, lysine 158, isoleucine 187, threonine 189, and leucine 191 together coordinate NAD(+). Tyrosine 154 acts as the Proton acceptor in catalysis.

It belongs to the short-chain dehydrogenases/reductases (SDR) family. In terms of assembly, homotetramer. As to expression, highly expressed in brain, placenta, liver and kidney.

It localises to the cytoplasm. It carries out the reaction L-fucose + NAD(+) = L-fucono-1,5-lactone + NADH + H(+). The enzyme catalyses D-arabinose + NAD(+) = D-arabinono-1,5-lactone + NADH + H(+). The catalysed reaction is L-galactose + NAD(+) = L-galactono-1,5-lactone + NADH + H(+). It participates in carbohydrate degradation; L-fucose degradation. Catalyzes the NAD(+)-dependent oxidation of L-fucose, yielding L-fucono-1,5-lactone, which rapidly converts spontaneously to L-fucone-1,4-lactone. Can also act on D-arabinose and L-galactose, with lower catalytic efficiency. Does not use NADPH. May be the initial enzyme of the L-fucose degradation pathway in mammals. The sequence is that of L-fucose dehydrogenase from Homo sapiens (Human).